The chain runs to 263 residues: MNRIYLYLLIVLILAGCSSPGGRYDMSDDQAPDTPLSVEHIEDAHPQYEPYSFGGNKDYNLRGKSYRIIKNPKGFTESGKASWYGKKFHGHLTSNGEIYDMYSMTAAHKTLPIPSYVKVTNTDNGKSTVVRVNDRGPFHDGRIIDLSYAAAYKIGVVQAGTANVRIEVITVDKPTKPRPKSKNNALEYVIQVVSSQHIERVRTLAQNLGQNLSAPSFVESTNNTHRLFLGPFTDDDLTQTLLEQVKSAGYDSAFIKTINKRAK.

The first 16 residues, 1-16, serve as a signal peptide directing secretion; the sequence is MNRIYLYLLIVLILAG. Cys17 is lipidated: N-palmitoyl cysteine. A lipid anchor (S-diacylglycerol cysteine) is attached at Cys17. The region spanning 182–257 is the SPOR domain; the sequence is KNNALEYVIQ…AGYDSAFIKT (76 aa).

Belongs to the RlpA family.

The protein localises to the cell membrane. Functionally, lytic transglycosylase with a strong preference for naked glycan strands that lack stem peptides. This is Endolytic peptidoglycan transglycosylase RlpA from Vibrio cholerae serotype O1 (strain ATCC 39315 / El Tor Inaba N16961).